A 352-amino-acid chain; its full sequence is Photosystem II protein D1 (352 aa).

Residue Thr-2 is modified to N-acetylthreonine. Thr-2 carries the phosphothreonine modification. The next 3 membrane-spanning stretches (helical) occupy residues 29–46, 118–133, and 142–156; these read YIGWFGVLMIPTLLTATS, HFFLGICCYMGREWEL, and WIAVAYSAPVAAATA. His-118 is a chlorophyll a binding site. Tyr-126 provides a ligand contact to pheophytin a. [CaMn4O5] cluster-binding residues include Asp-170 and Glu-189. Residues 197 to 218 traverse the membrane as a helical segment; the sequence is FHMLGVAGVFGGSLFSAMHGSL. His-198 lines the chlorophyll a pocket. Residues His-215 and 264–265 contribute to the a quinone site; that span reads SF. Position 215 (His-215) interacts with Fe cation. His-272 contributes to the Fe cation binding site. A helical transmembrane segment spans residues 274 to 288; the sequence is FLAAWPVVGIWFTAL. His-332, Glu-333, Asp-342, and Ala-344 together coordinate [CaMn4O5] cluster. The propeptide occupies 345 to 352; sequence SVEAPSIA.

This sequence belongs to the reaction center PufL/M/PsbA/D family. PSII is composed of 1 copy each of membrane proteins PsbA, PsbB, PsbC, PsbD, PsbE, PsbF, PsbH, PsbI, PsbJ, PsbK, PsbL, PsbM, PsbT, PsbX, PsbY, PsbZ, Psb30/Ycf12, at least 3 peripheral proteins of the oxygen-evolving complex and a large number of cofactors. It forms dimeric complexes. Requires The D1/D2 heterodimer binds P680, chlorophylls that are the primary electron donor of PSII, and subsequent electron acceptors. It shares a non-heme iron and each subunit binds pheophytin, quinone, additional chlorophylls, carotenoids and lipids. D1 provides most of the ligands for the Mn4-Ca-O5 cluster of the oxygen-evolving complex (OEC). There is also a Cl(-1) ion associated with D1 and D2, which is required for oxygen evolution. The PSII complex binds additional chlorophylls, carotenoids and specific lipids. as cofactor. Post-translationally, tyr-161 forms a radical intermediate that is referred to as redox-active TyrZ, YZ or Y-Z. C-terminally processed by CTPA; processing is essential to allow assembly of the oxygen-evolving complex and thus photosynthetic growth.

It localises to the plastid. The protein localises to the chloroplast thylakoid membrane. It catalyses the reaction 2 a plastoquinone + 4 hnu + 2 H2O = 2 a plastoquinol + O2. Functionally, photosystem II (PSII) is a light-driven water:plastoquinone oxidoreductase that uses light energy to abstract electrons from H(2)O, generating O(2) and a proton gradient subsequently used for ATP formation. It consists of a core antenna complex that captures photons, and an electron transfer chain that converts photonic excitation into a charge separation. The D1/D2 (PsbA/PsbD) reaction center heterodimer binds P680, the primary electron donor of PSII as well as several subsequent electron acceptors. This Chlorella ellipsoidea protein is Photosystem II protein D1.